A 256-amino-acid polypeptide reads, in one-letter code: L-erythrulose-1-phosphate isomerase (256 aa).

Catalysis depends on histidine 96, which acts as the Electrophile. Glutamate 169 acts as the Proton acceptor in catalysis. Substrate-binding residues include glycine 175 and serine 212.

The protein belongs to the triosephosphate isomerase family. In terms of assembly, homodimer.

It is found in the cytoplasm. The enzyme catalyses L-erythrulose 1-phosphate = D-erythrulose 4-phosphate. The protein operates within carbohydrate metabolism; erythritol degradation. Its function is as follows. Catalyzes the isomerization of D-erythrulose-4P to L-erythrulose-1P. The protein is L-erythrulose-1-phosphate isomerase of Brucella melitensis biotype 1 (strain ATCC 23456 / CCUG 17765 / NCTC 10094 / 16M).